Reading from the N-terminus, the 1169-residue chain is Zinc finger protein 862 (1169 aa).

The KRAB 1 domain occupies 11–77 (VTFDDITVYL…SVQGQRSLLE (67 aa)). Residues 135–218 (KPRSIQKSWF…RDPIWAARFR (84 aa)) form a TTF-type 1 zinc finger. In terms of domain architecture, KRAB 2 spans 333–404 (VVFEDVAVYF…DPNGPKWGKG (72 aa)). Residues 461–544 (RPRSIQRSWF…KEDTPHTALV (84 aa)) form a TTF-type 2 zinc finger.

The protein resides in the nucleus. Its function is as follows. May be involved in transcriptional regulation. This Homo sapiens (Human) protein is Zinc finger protein 862 (ZNF862).